We begin with the raw amino-acid sequence, 166 residues long: Replication restart protein DnaT (166 aa).

Belongs to the DnaT family. Homooligomerizes. Interacts with PriB. Component of the replication restart primosome. Primosome assembly occurs via a 'hand-off' mechanism. PriA binds to replication forks, subsequently PriB then DnaT bind; DnaT then displaces ssDNA to generate the helicase loading substrate.

Its function is as follows. Involved in the restart of stalled replication forks, which reloads the replicative helicase on sites other than the origin of replication. Can function in multiple replication restart pathways. Displaces ssDNA from a PriB-ssDNA complex. Probably forms a spiral filament on ssDNA. This Buchnera aphidicola subsp. Schizaphis graminum (strain Sg) protein is Replication restart protein DnaT.